We begin with the raw amino-acid sequence, 146 residues long: Snaclec jerdonibitin subunit beta (146 aa).

The first 23 residues, 1 to 23 (MGRFIFVSFGLLVVFLSLSGTGA), serve as a signal peptide directing secretion. Disulfide bonds link Cys-25/Cys-36, Cys-53/Cys-142, and Cys-119/Cys-134. Positions 32–143 (YEGHCYRVFQ…CSKTYPFVCK (112 aa)) constitute a C-type lectin domain.

It belongs to the snaclec family. Heterodimer of subunits alpha and beta; disulfide-linked. In terms of tissue distribution, expressed by the venom gland.

It is found in the secreted. Functionally, snaclec that dose-dependently inhibits platelet aggregation induced by ristocetin or low-dose thrombin, but not by high-dose thrombin. Binds to GPIbalpha (GP1BA). In vivo, also dose-dependently induces thrombocytopenia of mice and platelet counts remains at very low level even after 18 hours intravenous injection. The polypeptide is Snaclec jerdonibitin subunit beta (Protobothrops jerdonii (Jerdon's pitviper)).